The following is a 459-amino-acid chain: Cysteine--tRNA ligase (459 aa).

Cys29 is a Zn(2+) binding site. The 'HIGH' region motif lies at 31-41; the sequence is VTTYDYCHIGH. Zn(2+)-binding residues include Cys210, His235, and Glu239. The short motif at 267–271 is the 'KMSKS' region element; the sequence is KMSKS. Lys270 is a binding site for ATP.

This sequence belongs to the class-I aminoacyl-tRNA synthetase family. As to quaternary structure, monomer. Requires Zn(2+) as cofactor.

The protein localises to the cytoplasm. The catalysed reaction is tRNA(Cys) + L-cysteine + ATP = L-cysteinyl-tRNA(Cys) + AMP + diphosphate. This Idiomarina loihiensis (strain ATCC BAA-735 / DSM 15497 / L2-TR) protein is Cysteine--tRNA ligase.